The chain runs to 283 residues: uncharacterized protein (283 aa).

The next 4 helical transmembrane spans lie at 11-31 (LFAY…YVSA), 35-55 (EGAL…WFGP), 56-76 (IYAL…MMFF), and 93-113 (LVVW…IHDI). The GGDEF domain maps to 162–283 (NSFVFLLLHM…LENEMMMNEL (122 aa)).

The protein resides in the cell membrane. This is an uncharacterized protein from Bacillus subtilis (strain 168).